Here is a 196-residue protein sequence, read N- to C-terminus: Peptide deformylase (196 aa).

Residues Cys105 and His147 each contribute to the Fe cation site. Residue Glu148 is part of the active site. Position 151 (His151) interacts with Fe cation.

It belongs to the polypeptide deformylase family. The cofactor is Fe(2+).

It catalyses the reaction N-terminal N-formyl-L-methionyl-[peptide] + H2O = N-terminal L-methionyl-[peptide] + formate. Its function is as follows. Removes the formyl group from the N-terminal Met of newly synthesized proteins. Requires at least a dipeptide for an efficient rate of reaction. N-terminal L-methionine is a prerequisite for activity but the enzyme has broad specificity at other positions. This is Peptide deformylase from Flavobacterium johnsoniae (strain ATCC 17061 / DSM 2064 / JCM 8514 / BCRC 14874 / CCUG 350202 / NBRC 14942 / NCIMB 11054 / UW101) (Cytophaga johnsonae).